The chain runs to 457 residues: Siroheme synthase (457 aa).

The tract at residues 1 to 204 (MDHLPIFCQL…NDQKAITETT (204 aa)) is precorrin-2 dehydrogenase /sirohydrochlorin ferrochelatase. NAD(+) contacts are provided by residues 22–23 (DV) and 43–44 (LA). Ser-128 is modified (phosphoserine). Residues 216–457 (GEVVLVGAGP…RDKLNWFSNH (242 aa)) are uroporphyrinogen-III C-methyltransferase. Pro-225 lines the S-adenosyl-L-methionine pocket. Residue Asp-248 is the Proton acceptor of the active site. Catalysis depends on Lys-270, which acts as the Proton donor. S-adenosyl-L-methionine-binding positions include 301–303 (GGD), Ile-306, 331–332 (TA), Met-382, and Gly-411.

This sequence in the N-terminal section; belongs to the precorrin-2 dehydrogenase / sirohydrochlorin ferrochelatase family. The protein in the C-terminal section; belongs to the precorrin methyltransferase family.

It carries out the reaction uroporphyrinogen III + 2 S-adenosyl-L-methionine = precorrin-2 + 2 S-adenosyl-L-homocysteine + H(+). The enzyme catalyses precorrin-2 + NAD(+) = sirohydrochlorin + NADH + 2 H(+). It catalyses the reaction siroheme + 2 H(+) = sirohydrochlorin + Fe(2+). Its pathway is cofactor biosynthesis; adenosylcobalamin biosynthesis; precorrin-2 from uroporphyrinogen III: step 1/1. It functions in the pathway cofactor biosynthesis; adenosylcobalamin biosynthesis; sirohydrochlorin from precorrin-2: step 1/1. The protein operates within porphyrin-containing compound metabolism; siroheme biosynthesis; precorrin-2 from uroporphyrinogen III: step 1/1. It participates in porphyrin-containing compound metabolism; siroheme biosynthesis; siroheme from sirohydrochlorin: step 1/1. Its pathway is porphyrin-containing compound metabolism; siroheme biosynthesis; sirohydrochlorin from precorrin-2: step 1/1. Its function is as follows. Multifunctional enzyme that catalyzes the SAM-dependent methylations of uroporphyrinogen III at position C-2 and C-7 to form precorrin-2 via precorrin-1. Then it catalyzes the NAD-dependent ring dehydrogenation of precorrin-2 to yield sirohydrochlorin. Finally, it catalyzes the ferrochelation of sirohydrochlorin to yield siroheme. In Shigella boydii serotype 18 (strain CDC 3083-94 / BS512), this protein is Siroheme synthase.